Consider the following 269-residue polypeptide: Diaminopimelate epimerase (269 aa).

The substrate site is built by N15 and N66. The Proton donor role is filled by C75. Substrate-binding positions include 76–77, N152, N185, and 203–204; these read GN and ER. The active-site Proton acceptor is the C212. 213 to 214 contributes to the substrate binding site; that stretch reads GT.

This sequence belongs to the diaminopimelate epimerase family. In terms of assembly, homodimer.

It is found in the cytoplasm. The enzyme catalyses (2S,6S)-2,6-diaminopimelate = meso-2,6-diaminopimelate. It participates in amino-acid biosynthesis; L-lysine biosynthesis via DAP pathway; DL-2,6-diaminopimelate from LL-2,6-diaminopimelate: step 1/1. Catalyzes the stereoinversion of LL-2,6-diaminopimelate (L,L-DAP) to meso-diaminopimelate (meso-DAP), a precursor of L-lysine and an essential component of the bacterial peptidoglycan. The chain is Diaminopimelate epimerase from Parabacteroides distasonis (strain ATCC 8503 / DSM 20701 / CIP 104284 / JCM 5825 / NCTC 11152).